The primary structure comprises 166 residues: Stress response protein NhaX (166 aa).

Belongs to the universal stress protein A family.

This is Stress response protein NhaX (nhaX) from Bacillus subtilis (strain 168).